Consider the following 529-residue polypeptide: Cytochrome P450 monooxygenase fsoB (529 aa).

Residues 4-24 (WLLSLLIAGVVFAIFQLRTVG) traverse the membrane as a helical segment. Residue C436 coordinates heme.

This sequence belongs to the cytochrome P450 family. It depends on heme as a cofactor.

The protein localises to the membrane. Cytochrome P450 monooxygenase; part of the gene cluster that mediates the biosynthesis of the enfumafungin-type antibiotic fuscoatroside. Four enzymes are sufficient to produce fuscoatroside: the terpene cyclase-glycosyl transferase fusion protein fsoAthe cytochrome P450 monoxygenases fsoD and fsoE, and the acetyltransferase fsoF; the cytochrome P450 monooxygenase fsoB and the glucose oxidase-like protein fsoC do not seem to play a role in biosynthesis of fuscoatroside. The polypeptide is Cytochrome P450 monooxygenase fsoB (Humicola fuscoatra).